The following is a 170-amino-acid chain: Lipoprotein signal peptidase (170 aa).

3 consecutive transmembrane segments (helical) span residues I9 to V29, L72 to E92, and T93 to I113. Residues D124 and D146 contribute to the active site. The chain crosses the membrane as a helical span at residues F142–F162.

The protein belongs to the peptidase A8 family.

Its subcellular location is the cell inner membrane. The enzyme catalyses Release of signal peptides from bacterial membrane prolipoproteins. Hydrolyzes -Xaa-Yaa-Zaa-|-(S,diacylglyceryl)Cys-, in which Xaa is hydrophobic (preferably Leu), and Yaa (Ala or Ser) and Zaa (Gly or Ala) have small, neutral side chains.. It participates in protein modification; lipoprotein biosynthesis (signal peptide cleavage). This protein specifically catalyzes the removal of signal peptides from prolipoproteins. In Borrelia hermsii (strain HS1 / DAH), this protein is Lipoprotein signal peptidase.